A 286-amino-acid polypeptide reads, in one-letter code: Ribosomal RNA small subunit methyltransferase A (286 aa).

S-adenosyl-L-methionine contacts are provided by H11, L13, G44, E65, D90, and N115.

This sequence belongs to the class I-like SAM-binding methyltransferase superfamily. rRNA adenine N(6)-methyltransferase family. RsmA subfamily.

The protein localises to the cytoplasm. It catalyses the reaction adenosine(1518)/adenosine(1519) in 16S rRNA + 4 S-adenosyl-L-methionine = N(6)-dimethyladenosine(1518)/N(6)-dimethyladenosine(1519) in 16S rRNA + 4 S-adenosyl-L-homocysteine + 4 H(+). Its function is as follows. Specifically dimethylates two adjacent adenosines (A1518 and A1519) in the loop of a conserved hairpin near the 3'-end of 16S rRNA in the 30S particle. May play a critical role in biogenesis of 30S subunits. This chain is Ribosomal RNA small subunit methyltransferase A, found in Nostoc punctiforme (strain ATCC 29133 / PCC 73102).